The sequence spans 273 residues: NH(3)-dependent NAD(+) synthetase (273 aa).

An ATP-binding site is contributed by 47–54; the sequence is GISGGQDS. D53 contributes to the Mg(2+) binding site. R139 provides a ligand contact to deamido-NAD(+). T159 lines the ATP pocket. E164 is a Mg(2+) binding site. Deamido-NAD(+)-binding residues include K172 and D179. ATP-binding residues include K188 and T210. 259–260 contributes to the deamido-NAD(+) binding site; the sequence is HK.

It belongs to the NAD synthetase family. Homodimer.

It catalyses the reaction deamido-NAD(+) + NH4(+) + ATP = AMP + diphosphate + NAD(+) + H(+). The protein operates within cofactor biosynthesis; NAD(+) biosynthesis; NAD(+) from deamido-NAD(+) (ammonia route): step 1/1. Its function is as follows. Catalyzes the ATP-dependent amidation of deamido-NAD to form NAD. Uses ammonia as a nitrogen source. This Staphylococcus saprophyticus subsp. saprophyticus (strain ATCC 15305 / DSM 20229 / NCIMB 8711 / NCTC 7292 / S-41) protein is NH(3)-dependent NAD(+) synthetase.